The sequence spans 412 residues: Alpha-2,8-sialyltransferase 8E (412 aa).

Topologically, residues 1–16 are cytoplasmic; the sequence is MRYADPSANRDLLGNR. A helical; Signal-anchor for type II membrane protein membrane pass occupies residues 17-37; the sequence is TLLFIFICAFALVTLLQQILY. Residues 38–412 are Lumenal-facing; sequence SKSYIKRGFQ…RVHTGTCNCC (375 aa). N-linked (GlcNAc...) asparagine glycosylation is found at Asn58, Asn64, Asn73, and Asn92. 2 cysteine pairs are disulfide-bonded: Cys200–Cys349 and Cys214–Cys409. Substrate-binding positions include Asn228 and 250–252; that span reads NPS. Asn277 is a glycosylation site (N-linked (GlcNAc...) asparagine). Position 336–338 (336–338) interacts with substrate; that stretch reads STG. His384 acts as the Proton donor/acceptor in catalysis.

This sequence belongs to the glycosyltransferase 29 family. In terms of tissue distribution, highly expressed in brain. Expressed at low levels in other tissues, including liver, testis, lung, placenta and spleen.

It localises to the golgi apparatus membrane. The catalysed reaction is a ganglioside GT1b (d18:1(4E)) + CMP-N-acetyl-beta-neuraminate = a ganglioside GQ1b (d18:1(4E)) + CMP + H(+). It catalyses the reaction a ganglioside GD3 (d18:1(4E)) + CMP-N-acetyl-beta-neuraminate = a ganglioside GT3 (d18:1(4E)) + CMP + H(+). The enzyme catalyses a ganglioside GD1a (d18:1(4E)) + CMP-N-acetyl-beta-neuraminate = a ganglioside GT1a (d18:1(4E)) + CMP + H(+). It carries out the reaction a ganglioside GM1b (d18:1(4E)) + CMP-N-acetyl-beta-neuraminate = a ganglioside GD1c (d18:1(4E)) + CMP + H(+). The catalysed reaction is a ganglioside GQ1c (d18:1(4E)) + CMP-N-acetyl-beta-neuraminate = a ganglioside GP1c (d18:1(4E)) + CMP + H(+). The protein operates within protein modification; protein glycosylation. Functionally, involved in the synthesis of gangliosides GD1c, GT1a, GQ1b, GP1c and GT3 from GD1a, GT1b, GM1b and GD3 respectively. This chain is Alpha-2,8-sialyltransferase 8E, found in Mus musculus (Mouse).